A 328-amino-acid polypeptide reads, in one-letter code: Lateral signaling target 1 protein (328 aa).

3 disordered regions span residues 56–78 (SSQD…GLRS), 108–135 (PTHY…SASS), and 177–200 (PVQP…RLNG). The segment covering 178 to 200 (VQPSTSTSRNNVSQISGSSRLNG) has biased composition (polar residues).

As to quaternary structure, interacts with fbf-2; the interaction probably mediates the release of the C-terminal tail of fbf-2 from the RNA-binding domain, thereby altering its RNA-binding affinity.

Plays a role in germline stem cell maintenance, perhaps acting in concert with mRNA-binding factor fbf-2. May regulate fbf-2 by modulating RNA-binding and perhaps by competition with the intramolecular interaction between the fbf-2 RNA-binding domain and C-terminal tail. The polypeptide is Lateral signaling target 1 protein (Caenorhabditis elegans).